The sequence spans 188 residues: MYTRYKLSILFFVINFYNILCMPLSCETECCMAGKKYDDAAIDRDLCVLLCNLQYLASSNEGIGEILQCCLSSNYTSKTREDLRNCIAKCPPLPDRGCTGECCDLRENVDSLRANNPLGCCNDYTKVSSSSLNEDDVIDCRKSDASCEDRGYLLVRNNGSAVCIPENSKNDNIGFYFGSECSDLSRKG.

This sequence belongs to the intercrine beta (chemokine CC) family. Highly divergent.

This is Putative CC-type chemokine FPV060 from Fowlpox virus (strain NVSL) (FPV).